The following is a 136-amino-acid chain: Large ribosomal subunit protein uL16 (136 aa).

This sequence belongs to the universal ribosomal protein uL16 family. As to quaternary structure, part of the 50S ribosomal subunit.

Binds 23S rRNA and is also seen to make contacts with the A and possibly P site tRNAs. The polypeptide is Large ribosomal subunit protein uL16 (Karelsulcia muelleri (strain GWSS) (Sulcia muelleri)).